A 226-amino-acid polypeptide reads, in one-letter code: Phospholipase Culp4 (226 aa).

A signal peptide spans 1–45; sequence MIPRPQPHSGRWRAGAARRLTSLVAAAFAAATLLLTPALAPPASA. An intrachain disulfide couples Cys-47 to Cys-117. Residue Ser-128 is the Nucleophile of the active site. A disulfide bridge links Cys-191 with Cys-198. The active site involves Asp-195. His-207 functions as the Proton donor/acceptor in the catalytic mechanism.

The protein belongs to the cutinase family. Homodimer.

The protein resides in the cell membrane. It is found in the secreted. Its subcellular location is the cell wall. The catalysed reaction is 1,2-dihexadecanoyl-sn-glycero-3-phosphocholine + H2O = 1-hexadecanoyl-sn-glycero-3-phosphocholine + hexadecanoate + H(+). It carries out the reaction a butanoate ester + H2O = an aliphatic alcohol + butanoate + H(+). Its activity is regulated as follows. Inhibited by high concentrations of paraoxon. Inhibited by tetrahydrolipstatin (THL), a specific lipase inhibitor. Its function is as follows. A2-type phospholipase, which is probably involved in the degradation of macrophage membrane. Hydrolyzes dipalmitoylphosphatidylcholine. Also shows moderate esterase activity and hydrolyzes the p-nitrophenol-linked aliphatic ester pNP-butyrate (C4). Does not exhibit cutinase activity. This Mycobacterium tuberculosis (strain ATCC 25618 / H37Rv) protein is Phospholipase Culp4.